The chain runs to 535 residues: Growth factor receptor-bound protein 7 (535 aa).

The interval 1 to 90 (MELDLSPTHL…PILGGSSGAR (90 aa)) is disordered. Pro residues predominate over residues 21 to 37 (PATPPETPPPPDNPPPG). In terms of domain architecture, Ras-associating spans 99 to 185 (RLCVVKVYSE…SRFIFRKNFA (87 aa)). Tyrosine 187 and tyrosine 341 each carry phosphotyrosine; by FAK1. Residues 228 to 341 (FPEIQGFLQL…WLAAFRLFKY (114 aa)) form the PH domain. Position 364 is a phosphoserine (serine 364). Positions 434-530 (WFHGRISREE…ILPCLLRHCC (97 aa)) constitute an SH2 domain.

This sequence belongs to the GRB7/10/14 family. As to quaternary structure, homodimer. Interacts (via SH2 domain) with EGFR, ERBB2, ERBB3 (when phosphorylated), ERBB4 (when phosphorylated), EPHB1, INSR, FGFR1, PDGFRA (tyrosine phosphorylated) and PDGFRB (tyrosine phosphorylated). Interacts with SHC1. Interacts with RND1. Interacts (when tyrosine phosphorylated) with FHL2 and HAX1. Interacts (via SH2 domain) with RET and PTK2/FAK1. Interacts (when not phosphorylated) with ELAVL1. In stressed cells, but not in normal cells, part of a complex that contains at least GRB7, PTK2/FAK1, STAU1, ELAVL1 and TIA1. Interacts (via SH2 domain) with KIT (phosphorylated). Interacts (via SH2 domain) with TEK/TIE2 (tyrosine phosphorylated). In terms of processing, phosphorylated on serine and threonine residues in response to activation of receptor kinases. Phosphorylated on tyrosine residues by TEK/TIE2. Phosphorylated on tyrosine residues by PTK2/FAK1, and possibly also other kinases. Phosphorylation is enhanced by activation of receptor kinases. Tyrosine phosphorylation is essential for activation of down-stream protein kinases. Phosphorylated on tyrosine residues in response to NTN1 signaling. Phosphorylation promotes stress granule disassembly during recovery after cellular stress.

The protein localises to the cytoplasm. It localises to the cell projection. Its subcellular location is the cell junction. The protein resides in the focal adhesion. It is found in the cell membrane. The protein localises to the cytoplasmic granule. Adapter protein that interacts with the cytoplasmic domain of numerous receptor kinases and modulates down-stream signaling. Promotes activation of down-stream protein kinases, including STAT3, AKT1, MAPK1 and/or MAPK3. Promotes activation of HRAS. Plays a role in signal transduction in response to EGF. Plays a role in the regulation of cell proliferation and cell migration. Plays a role in the assembly and stability of RNA stress granules. Binds to the 5'UTR of target mRNA molecules and represses translation of target mRNA species, when not phosphorylated. Phosphorylation impairs RNA binding and promotes stress granule disassembly during recovery after cellular stress. The chain is Growth factor receptor-bound protein 7 (Grb7) from Mus musculus (Mouse).